A 207-amino-acid chain; its full sequence is Glycerol-3-phosphate acyltransferase (207 aa).

6 helical membrane passes run 7–27 (YALA…LVIV), 58–78 (LATF…FTLL), 83–103 (VGFV…WLGF), 116–136 (LAFV…LGLF), 141–161 (ISSL…WLMG), and 166–186 (LILA…RENI).

It belongs to the PlsY family. Probably interacts with PlsX.

It is found in the cell inner membrane. The enzyme catalyses an acyl phosphate + sn-glycerol 3-phosphate = a 1-acyl-sn-glycero-3-phosphate + phosphate. It participates in lipid metabolism; phospholipid metabolism. Its function is as follows. Catalyzes the transfer of an acyl group from acyl-phosphate (acyl-PO(4)) to glycerol-3-phosphate (G3P) to form lysophosphatidic acid (LPA). This enzyme utilizes acyl-phosphate as fatty acyl donor, but not acyl-CoA or acyl-ACP. In Hyphomonas neptunium (strain ATCC 15444), this protein is Glycerol-3-phosphate acyltransferase.